Reading from the N-terminus, the 417-residue chain is Gamma-glutamyl phosphate reductase (417 aa).

The protein belongs to the gamma-glutamyl phosphate reductase family.

Its subcellular location is the cytoplasm. The catalysed reaction is L-glutamate 5-semialdehyde + phosphate + NADP(+) = L-glutamyl 5-phosphate + NADPH + H(+). Its pathway is amino-acid biosynthesis; L-proline biosynthesis; L-glutamate 5-semialdehyde from L-glutamate: step 2/2. In terms of biological role, catalyzes the NADPH-dependent reduction of L-glutamate 5-phosphate into L-glutamate 5-semialdehyde and phosphate. The product spontaneously undergoes cyclization to form 1-pyrroline-5-carboxylate. The sequence is that of Gamma-glutamyl phosphate reductase from Enterococcus faecalis (strain ATCC 700802 / V583).